The chain runs to 248 residues: Peptidyl-tRNA hydrolase (248 aa).

Residue tyrosine 14 coordinates tRNA. Histidine 19 (proton acceptor) is an active-site residue. The tRNA site is built by phenylalanine 64, asparagine 66, and asparagine 112. Residues 190-248 (PRSSTGEASKGRKKAQKSEPGVAKTPAKAATPEAPAAGDIPAAPEDSRSPMQKLLDKFK) form a disordered region. The segment covering 212-226 (AKTPAKAATPEAPAA) has biased composition (low complexity).

Belongs to the PTH family. Monomer.

Its subcellular location is the cytoplasm. The enzyme catalyses an N-acyl-L-alpha-aminoacyl-tRNA + H2O = an N-acyl-L-amino acid + a tRNA + H(+). Hydrolyzes ribosome-free peptidyl-tRNAs (with 1 or more amino acids incorporated), which drop off the ribosome during protein synthesis, or as a result of ribosome stalling. In terms of biological role, catalyzes the release of premature peptidyl moieties from peptidyl-tRNA molecules trapped in stalled 50S ribosomal subunits, and thus maintains levels of free tRNAs and 50S ribosomes. The sequence is that of Peptidyl-tRNA hydrolase from Ruegeria sp. (strain TM1040) (Silicibacter sp.).